A 62-amino-acid chain; its full sequence is Paralithocin 1 (62 aa).

Positions 1 to 23 (MGPMKVLLVLLVVMVAAPHIADA) are cleaved as a signal peptide. Cystine bridges form between C29/C55, C33/C51, C37/C49, and C42/C52. Y61 is modified (tyrosine amide; partial).

The protein belongs to the paralithocin family. Post-translationally, the amidated form is probably the active form.

In terms of biological role, has weak antibacterial activity, mainly against marine Gram-positive bacteria like C.maltaromaticum (MIC=200 uM), C.mobile (MIC=100 uM), C.divergens (MIC=200 uM) and C.funditum (MIC=200 uM) but also against C.glutamicum (MIC=50 uM). Has very little or no activity against Gram-negative bacteria. The polypeptide is Paralithocin 1 (Paralithodes camtschaticus (Red king crab)).